We begin with the raw amino-acid sequence, 1907 residues long: Chromatin modification-related protein EAF1 B (1907 aa).

4 disordered regions span residues 108–208 (ASPH…TDLV), 261–287 (NRVSSNSLNTKVDGEPVVRESTAGSKT), 323–373 (GGSP…SHAN), and 449–469 (NQSHRSTAEMQTKEKSSETEK). A compositionally biased stretch (basic and acidic residues) spans 140-151 (SENKSVEGERNL). Polar residues-rich tracts occupy residues 261-270 (NRVSSNSLNT), 333-342 (GQKNSSTQLN), and 355-372 (TNRGATGTNGLESESSHA). The HSA domain maps to 563–641 (CGTAPVEVRE…LSYAILQFWS (79 aa)). Disordered stretches follow at residues 836 to 909 (SSSL…AVQK) and 928 to 952 (AETSGKPKKKKKTHQGSAYDQTWHL). Residues 856–866 (RRVRTASRHRV) are compositionally biased toward basic residues. Composition is skewed to polar residues over residues 884–898 (TDASSGDTSSFQDEY) and 942–952 (QGSAYDQTWHL). The 57-residue stretch at 1049–1105 (SGNPWSLFEDQALVVLVHDMGPNWELISDAMNSTLKIKYIYRNPTECKDRHKILMDK) folds into the SANT domain. 8 disordered regions span residues 1107 to 1131 (AGDGADSAEDSGNSQSYPSTLPGIP), 1235 to 1266 (PVLPTSGAHPSTPGSSGVVLSNNLPTTSGLQS), 1296 to 1319 (LSGRNLQQPSLSTPAAVSGSDRGH), 1429 to 1465 (GHLSQQHQMSPQSHVLGNSHHPHLQSPSQATGAQQEA), 1477 to 1594 (YLQQ…QQLN), 1638 to 1703 (VRPD…SPAT), 1767 to 1791 (VPQSVTNTTQTASMGTTKGMPQASN), and 1824 to 1907 (VNNS…TKVE). Polar residues-rich tracts occupy residues 1116–1125 (DSGNSQSYPS), 1242–1266 (AHPSTPGSSGVVLSNNLPTTSGLQS), 1296–1310 (LSGRNLQQPSLSTPA), 1431–1444 (LSQQHQMSPQSHVL), and 1453–1462 (QSPSQATGAQ). Over residues 1493-1512 (PHVQQPQGSSVSSSSQNSPQ) the composition is skewed to low complexity. Residues 1513–1529 (TQPPVSPQPLSMPPVSP) show a composition bias toward pro residues. Composition is skewed to polar residues over residues 1532–1545 (NINAMAQQKPQKSQ), 1554–1568 (SPQSGTSGVNNQAGK), 1585–1594 (RQPTQGQQLN), 1640–1655 (PDQQSSVGTTTSTDLQ), 1662–1672 (PLSSNHSQQLP), 1681–1703 (PSPQQQMQLHSDNSIQGQSSPAT), 1769–1782 (QSVTNTTQTASMGT), and 1824–1844 (VNNSNTDSAGNDPVSTPNQGL). Composition is skewed to basic and acidic residues over residues 1863–1872 (SEEKRPKLPE) and 1882–1892 (LASEEQPHLEE).

This sequence belongs to the EAF1 family. In terms of assembly, component of the NuA4 histone acetyltransferase complex. Interacts with ARP4 and SWC4, and (via HSA domain) with TAF14 and TAF14B. As to expression, expressed in leaves.

Its subcellular location is the nucleus. Its function is as follows. Component of the NuA4 histone acetyltransferase complex which is involved in transcriptional activation of selected genes principally by acetylation of nucleosomal histone H4 and H2A. This is Chromatin modification-related protein EAF1 B (EAF1B) from Arabidopsis thaliana (Mouse-ear cress).